The sequence spans 589 residues: Probable translation initiation factor IF-2 (589 aa).

A tr-type G domain is found at 14–229 (LRQPIVCVLG…LAGLAQRFLE (216 aa)). The G1 stretch occupies residues 23-30 (GHVDHGKT). Position 23–30 (23–30 (GHVDHGKT)) interacts with GTP. The interval 48 to 52 (GITQR) is G2. Residues 84 to 87 (DTPG) form a G3 region. Residues 84-88 (DTPGH) and 138-141 (NKID) contribute to the GTP site. Positions 138–141 (NKID) are G4. The interval 206–208 (SAK) is G5.

This sequence belongs to the TRAFAC class translation factor GTPase superfamily. Classic translation factor GTPase family. IF-2 subfamily.

Its function is as follows. Function in general translation initiation by promoting the binding of the formylmethionine-tRNA to ribosomes. Seems to function along with eIF-2. This Thermoplasma acidophilum (strain ATCC 25905 / DSM 1728 / JCM 9062 / NBRC 15155 / AMRC-C165) protein is Probable translation initiation factor IF-2 (infB).